The following is a 476-amino-acid chain: Adenosylhomocysteinase (476 aa).

Residues threonine 67, aspartate 142, and glutamate 202 each contribute to the substrate site. Position 203 to 205 (203 to 205) interacts with NAD(+); it reads TTT. Substrate is bound by residues lysine 232 and aspartate 236. NAD(+) is bound by residues asparagine 237, 266–271, glutamate 289, asparagine 324, 345–347, and asparagine 390; these read GYGDVG and IGH.

This sequence belongs to the adenosylhomocysteinase family. It depends on NAD(+) as a cofactor.

The protein localises to the cytoplasm. The enzyme catalyses S-adenosyl-L-homocysteine + H2O = L-homocysteine + adenosine. The protein operates within amino-acid biosynthesis; L-homocysteine biosynthesis; L-homocysteine from S-adenosyl-L-homocysteine: step 1/1. In terms of biological role, may play a key role in the regulation of the intracellular concentration of adenosylhomocysteine. This chain is Adenosylhomocysteinase, found in Synechococcus sp. (strain CC9311).